The sequence spans 228 residues: Protein 33K (228 aa).

A disordered region spans residues 1–156; it reads MAPKKKLQLP…GALRLAPNEP (156 aa). Over residues 15–53 the composition is skewed to acidic residues; that stretch reads TDEEEYWDSQAEEVLDEEEEMMEDWDSLDEASEAEEVSD. Composition is skewed to low complexity over residues 54 to 63 and 104 to 119; these read ETPSPSVAFP and AAPT…ATAA. The segment at 171 to 198 is necessary for nuclear subcellular location; sequence YAIFQQSRGQEQELKIKNRSLRSLTRSC. The tract at residues 177–197 is RS-repeat; required for splicing enhancer activity; it reads SRGQEQELKIKNRSLRSLTRS.

It belongs to the adenoviridae splicing factor family. As to quaternary structure, homooligomer. Interacts with DBP; this interaction occurs at a unique vertex during genome packaging. Interacts with IVa2; this interaction occurs at a unique vertex during genome packaging and seems to potentiate IVa2 and 33K oligomerization. In terms of processing, phosphorylated in vitro by human PKA and PRKDC. PRKDC inhibits, whereas PKA activates the splicing factor.

The protein localises to the host nucleus. In terms of biological role, promotes alternative splicing of late transcripts by promoting splicing at weak 3' splice sites. Required for the temporal activation of major late pre-mRNA splicing at late times of infection. Induces the splicing and expression of the late capsid vertex protein. Probably functions as the small terminase that is part of the molecular motor that translocates genomic DNA in empty capsid during DNA packaging. This motor is located at a unique vertex and comprises at least the IVa2 ATPase, the small terminase 33K and probably a portal. Forms a ring-like structure of about 17 nm in which genomic DNA is translocated into the capsid. Stimulates IVa2 ATPase activity in the presence of the viral genome. Once the DNA is packaged, the terminase detaches: the 33K protein is present in the empty particles, but not in the mature virions. Also involved in virion assembly. The chain is Protein 33K from Homo sapiens (Human).